We begin with the raw amino-acid sequence, 265 residues long: 3-methyl-2-oxobutanoate hydroxymethyltransferase (265 aa).

Residues aspartate 43 and aspartate 82 each contribute to the Mg(2+) site. 3-methyl-2-oxobutanoate is bound by residues 43-44, aspartate 82, and lysine 111; that span reads DS. Position 113 (glutamate 113) interacts with Mg(2+). The Proton acceptor role is filled by glutamate 180.

Belongs to the PanB family. In terms of assembly, homodecamer; pentamer of dimers. The cofactor is Mg(2+).

Its subcellular location is the cytoplasm. It catalyses the reaction 3-methyl-2-oxobutanoate + (6R)-5,10-methylene-5,6,7,8-tetrahydrofolate + H2O = 2-dehydropantoate + (6S)-5,6,7,8-tetrahydrofolate. It functions in the pathway cofactor biosynthesis; (R)-pantothenate biosynthesis; (R)-pantoate from 3-methyl-2-oxobutanoate: step 1/2. In terms of biological role, catalyzes the reversible reaction in which hydroxymethyl group from 5,10-methylenetetrahydrofolate is transferred onto alpha-ketoisovalerate to form ketopantoate. The chain is 3-methyl-2-oxobutanoate hydroxymethyltransferase from Francisella tularensis subsp. holarctica (strain OSU18).